The chain runs to 240 residues: Ubiquinone biosynthesis O-methyltransferase (240 aa).

Residues Arg-44, Gly-64, Asp-85, and Met-129 each contribute to the S-adenosyl-L-methionine site.

The protein belongs to the methyltransferase superfamily. UbiG/COQ3 family.

It catalyses the reaction a 3-demethylubiquinol + S-adenosyl-L-methionine = a ubiquinol + S-adenosyl-L-homocysteine + H(+). The enzyme catalyses a 3-(all-trans-polyprenyl)benzene-1,2-diol + S-adenosyl-L-methionine = a 2-methoxy-6-(all-trans-polyprenyl)phenol + S-adenosyl-L-homocysteine + H(+). Its pathway is cofactor biosynthesis; ubiquinone biosynthesis. Functionally, O-methyltransferase that catalyzes the 2 O-methylation steps in the ubiquinone biosynthetic pathway. In Photorhabdus laumondii subsp. laumondii (strain DSM 15139 / CIP 105565 / TT01) (Photorhabdus luminescens subsp. laumondii), this protein is Ubiquinone biosynthesis O-methyltransferase.